We begin with the raw amino-acid sequence, 91 residues long: Large ribosomal subunit protein eL43 (91 aa).

The C4-type zinc finger occupies cysteine 38–cysteine 59.

Belongs to the eukaryotic ribosomal protein eL43 family.

The protein is Large ribosomal subunit protein eL43 of Schistosoma mansoni (Blood fluke).